The following is a 1373-amino-acid chain: MSACSDFVEHIWKPGSCKNCFCLRSDHQPTAGHPKARANSLPAGTRLPARPENCRLDDEGVNGLAYSKPTIAVKPTMMTSETSDLWTEASLSAEVPKVNWRRTPGKLLLPKQEDEPIVYLGSFRGLQKPASPLACTDGNSRCPPAYTMVGLHNLEARVDRNTAFQPVSFQEEKAGREELPSAHESFRQKLAAFAGMTSSCPKGPRPCTSPQPLRESLPSEDDSDQRCSPSGDSEGGEYCSILDCCPESKDAVHSTEGSGRRGGDCSPTCREQGPRTRPTEEEKQGLSFPRECCGQGSTANPPRLGPKKPSLNSEAASSSDGLSCGSSRSGASSPFAPHLENDYCSLVKEPASGKQQDLSGHFLTSGKCVGQAAELQPASLLRDPVQPEPIYAESAKRKKAAPGPPRPEPKKEQVPAGHSQGQVWTGDTWIQKTPPSWSQDREGANPAPQVATTITVIAAHPEEDHRTIYLSSPDSAVGVQWPRGPSNQDLQAGEEEPLVAQGLTSRESHPHNVTENTAKEKPAIPPKLSKSSPGGSPVSPAPPLTDHSDGNTGGSSVGPQLLSRVPANLTSSCHTNGVATAGDSAKCPPPATSSSVLDQRRPRYQTGAWSRQCRIEEEEEVGQELSQSWGRELENGTADHSNSSTWHRLHPIDGTSGQNSKTNSGMSKSASFAFEFPKDRGRLEAFSPPPPPPKSRHLLKMNKSSSDLEKVSQSSAESLSPSFRGAHVSFTTGSTDSLASDSRPCSDGGPSYEPTHSPTISGKKLFAPVPFPSGSTEDVSPGGGPAQPPPLPQKKIVSRAASSPDGFFWTQGSPKPRTASPKLNLSHSETNVCAHDEPPFNCSLNSGNRSHHVFSSSEPLGKAFKGNAPWAPALGLANSKGGCGSPSLQCRAATSTSSSQLSVSSQASSSSTQLQLHSLLSSISSKEGTYAKLGGLYTQSLARLVTKCEDLFMGGQKKELRFNENYWSLFKLTCNKPCCDSGDAIYYCATCSEDPGSIYAVKICKTPEPKSASYCSPSVPVHFNIQQDCGHFVASVPSSMLASPDTSSKDTAPAVSPQPPAQEQDCVVVITREVPHQTASDFVRDSMASHRAEPEVYERRVCFLLLQLCNGLEHLKEHGIIHRDLCLENLLLAHCNPQSSPGPSATPTVPTTTSRCPSAAPAATTACQGGPGEKQLPRLIISNFLKAKQKPGGTTNLQQKKSQARLAPEIVSASQYRKFDEFQTGILIYELLHQPNPFEVRAQLRERDYRREDLPPLPTLSLYSPGLQQLAHLLLEADPIKRIRIGEAKRVLQCLLWGPRRELVEQPCTSEEVLCNTLHNWIDMKRALMMMKFAEKAVDRRRGVELEDWLCCQYLASAEPGALLQSLKLLQLL.

Disordered regions lie at residues 31-50 (AGHP…LPAR) and 197-235 (TSSC…DSEG). A Phosphotyrosine modification is found at tyrosine 238. Basic and acidic residues-rich tracts occupy residues 250-263 (DAVH…RRGG) and 272-284 (QGPR…EEKQ). Residues 250–338 (DAVHSTEGSG…SGASSPFAPH (89 aa)) are disordered. The span at 317-333 (SSSDGLSCGSSRSGASS) shows a compositional bias: low complexity. A phosphotyrosine mark is found at tyrosine 343 and tyrosine 391. Disordered stretches follow at residues 376–448 (QPAS…NPAP) and 468–794 (IYLS…LPQK). The segment covering 419 to 438 (SQGQVWTGDTWIQKTPPSWS) has biased composition (polar residues). A compositionally biased stretch (basic and acidic residues) spans 506-522 (RESHPHNVTENTAKEKP). Positions 526–538 (PKLSKSSPGGSPV) are enriched in low complexity. 2 stretches are compositionally biased toward polar residues: residues 568-578 (NLTSSCHTNGV) and 655-670 (TSGQ…SKSA). Phosphoserine is present on residues serine 671 and serine 720. Polar residues-rich tracts occupy residues 711-721 (VSQSSAESLSP) and 729-740 (SFTTGSTDSLAS). 2 positions are modified to phosphoserine: serine 757 and serine 802. The interval 804–823 (PDGFFWTQGSPKPRTASPKL) is disordered. Residues 911–954 (STQLQLHSLLSSISSKEGTYAKLGGLYTQSLARLVTKCEDLFMG) form a required for homodimerization region. The Protein kinase domain occupies 945-1296 (VTKCEDLFMG…EAKRVLQCLL (352 aa)). Polar residues predominate over residues 1041-1050 (LASPDTSSKD). Disordered regions lie at residues 1041–1062 (LASP…PPAQ) and 1138–1171 (QSSP…QGGP). Residues 1139–1167 (SSPGPSATPTVPTTTSRCPSAAPAATTAC) are compositionally biased toward low complexity. Residues 1298–1373 (GPRRELVEQP…LQSLKLLQLL (76 aa)) form a required for homodimerization region.

It belongs to the protein kinase superfamily. Homodimer. Dimerization leads to the catalytic activation of CSK. Interacts (via C-terminus) with RND2. Interacts with CSK (via SH2 domain) in a Tyr-391 phosphorylation-dependent manner; this interaction potentiates kinase activity of CSK. Interacts with NOTCH1 intracellular domain (N1ICD). Forms a complex with PRAG1, N1ICD and MAML1, in a MAML1-dependent manner. Phosphorylated by CSK on Tyr-238, Tyr-343, and Tyr-391; Tyr-391 is a primary site of phosphorylation.

It is found in the cytoplasm. The protein resides in the nucleus. The protein localises to the cell junction. Its subcellular location is the focal adhesion. Functionally, catalytically inactive protein kinase that acts as a scaffold protein. Functions as an effector of the small GTPase RND2, which stimulates RhoA activity and inhibits NGF-induced neurite outgrowth. Promotes Src family kinase (SFK) signaling by regulating the subcellular localization of CSK, a negative regulator of these kinases, leading to the regulation of cell morphology and motility by a CSK-dependent mechanism. Acts as a critical coactivator of Notch signaling. The chain is Inactive tyrosine-protein kinase PRAG1 from Mus musculus (Mouse).